Here is a 383-residue protein sequence, read N- to C-terminus: Lipid-A-disaccharide synthase (383 aa).

The protein belongs to the LpxB family.

The catalysed reaction is a lipid X + a UDP-2-N,3-O-bis[(3R)-3-hydroxyacyl]-alpha-D-glucosamine = a lipid A disaccharide + UDP + H(+). The protein operates within bacterial outer membrane biogenesis; LPS lipid A biosynthesis. Functionally, condensation of UDP-2,3-diacylglucosamine and 2,3-diacylglucosamine-1-phosphate to form lipid A disaccharide, a precursor of lipid A, a phosphorylated glycolipid that anchors the lipopolysaccharide to the outer membrane of the cell. The polypeptide is Lipid-A-disaccharide synthase (Aliivibrio fischeri (strain MJ11) (Vibrio fischeri)).